The primary structure comprises 399 residues: Secreted RxLR effector protein 36 (399 aa).

The N-terminal stretch at 1 to 21 is a signal peptide; the sequence is MRGTIYVAIAILVAASSRSSA. The short motif at 50–71 is the RxLR-dEER element; sequence RILRESRGSNDKLAVGAGDEER. A glycan (N-linked (GlcNAc...) asparagine) is linked at Asn-75. Residues 126–145 form a disordered region; that stretch reads IDPTPSNLGGQALHAPPNPD.

Belongs to the RxLR effector family.

Its subcellular location is the secreted. It is found in the host nucleus. Functionally, secreted effector that completely suppresses the host cell death induced by cell death-inducing proteins. The chain is Secreted RxLR effector protein 36 from Plasmopara viticola (Downy mildew of grapevine).